Consider the following 167-residue polypeptide: Low molecular mass early light-inducible protein HV60, chloroplastic (167 aa).

Residues 1-33 (MATMMAMSSFAGAAVLPRGSARSLPALGRRTLV) constitute a chloroplast transit peptide. 2 helical membrane-spanning segments follow: residues 101-121 (GQAW…VPLL) and 145-165 (FAMI…TPFI).

It belongs to the ELIP/psbS family.

It is found in the plastid. It localises to the chloroplast membrane. Probably involved in the integration of pigments into the mature pigment-protein complexes. The polypeptide is Low molecular mass early light-inducible protein HV60, chloroplastic (Hordeum vulgare (Barley)).